Consider the following 354-residue polypeptide: MFYYIYELLNFNIFQYITVRAGFSFFIAFCLTVYLMPKFIAWAKAKNAAQPIYELAPQTHQKKAKTPTMGGLVFIGAAVFATLLCARLDNVFVVASLLCLVGFSALGFKDDLNKILGGKNHDGLSPRAKLAVQVLIGLVVSSLLYFHGELGSKFYLPFYKFALLDLGVFAIVFWTIVIVAASNAVNLTDGLDGLASVPAIFSLLTLGVFAYICGHAVFSTYLLLPKIVGVGETVIIAAALIGSLMGFLWFNCHPAEVFMGDSGSLSVGAYIGLMGVMTKNEILLIIIGFVFVMETLSVILQVGSFKIFKKRIFLMAPIHHHFEIKGWVENKIIVRFWLIAILANLIALTALKIR.

10 helical membrane-spanning segments follow: residues 23–43 (FSFF…IAWA), 66–86 (TPTM…LLCA), 88–108 (LDNV…ALGF), 130–150 (LAVQ…HGEL), 161–181 (FALL…IVAA), 193–213 (GLAS…AYIC), 230–250 (VGET…FLWF), 257–277 (VFMG…MGVM), 282–302 (ILLI…ILQV), and 331–351 (KIIV…LTAL).

Belongs to the glycosyltransferase 4 family. MraY subfamily. The cofactor is Mg(2+).

It is found in the cell inner membrane. The enzyme catalyses UDP-N-acetyl-alpha-D-muramoyl-L-alanyl-gamma-D-glutamyl-meso-2,6-diaminopimeloyl-D-alanyl-D-alanine + di-trans,octa-cis-undecaprenyl phosphate = di-trans,octa-cis-undecaprenyl diphospho-N-acetyl-alpha-D-muramoyl-L-alanyl-D-glutamyl-meso-2,6-diaminopimeloyl-D-alanyl-D-alanine + UMP. It functions in the pathway cell wall biogenesis; peptidoglycan biosynthesis. Functionally, catalyzes the initial step of the lipid cycle reactions in the biosynthesis of the cell wall peptidoglycan: transfers peptidoglycan precursor phospho-MurNAc-pentapeptide from UDP-MurNAc-pentapeptide onto the lipid carrier undecaprenyl phosphate, yielding undecaprenyl-pyrophosphoryl-MurNAc-pentapeptide, known as lipid I. This is Phospho-N-acetylmuramoyl-pentapeptide-transferase from Campylobacter curvus (strain 525.92).